A 477-amino-acid polypeptide reads, in one-letter code: V-type proton ATPase subunit B (477 aa).

An ATP-binding site is contributed by arginine 365.

Belongs to the ATPase alpha/beta chains family. V-ATPase is a heteromultimeric enzyme composed of a peripheral catalytic V1 complex (components A to H) attached to an integral membrane V0 proton pore complex (components: a, c, c', c'', d, e, f and VOA1).

The protein resides in the vacuole membrane. Its function is as follows. Non-catalytic subunit of the V1 complex of vacuolar(H+)-ATPase (V-ATPase), a multisubunit enzyme composed of a peripheral complex (V1) that hydrolyzes ATP and a membrane integral complex (V0) that translocates protons. V-ATPase is responsible for acidifying and maintaining the pH of intracellular compartments. This is V-type proton ATPase subunit B from Encephalitozoon cuniculi (strain GB-M1) (Microsporidian parasite).